Consider the following 224-residue polypeptide: Large ribosomal subunit protein uL3 (224 aa).

An N5-methylglutamine modification is found at Gln159.

This sequence belongs to the universal ribosomal protein uL3 family. Part of the 50S ribosomal subunit. Forms a cluster with proteins L14 and L19. Post-translationally, methylated by PrmB.

Its function is as follows. One of the primary rRNA binding proteins, it binds directly near the 3'-end of the 23S rRNA, where it nucleates assembly of the 50S subunit. This chain is Large ribosomal subunit protein uL3, found in Janthinobacterium sp. (strain Marseille) (Minibacterium massiliensis).